The chain runs to 72 residues: uncharacterized protein (72 aa).

A helical transmembrane segment spans residues 33–53; it reads VCIFFSLIFFFFFFFFCVNWG.

It is found in the membrane. This is an uncharacterized protein from Dictyostelium discoideum (Social amoeba).